We begin with the raw amino-acid sequence, 257 residues long: Imidazole glycerol phosphate synthase subunit HisF (257 aa).

Residues Asp11 and Asp130 contribute to the active site.

This sequence belongs to the HisA/HisF family. As to quaternary structure, heterodimer of HisH and HisF.

The protein resides in the cytoplasm. The enzyme catalyses 5-[(5-phospho-1-deoxy-D-ribulos-1-ylimino)methylamino]-1-(5-phospho-beta-D-ribosyl)imidazole-4-carboxamide + L-glutamine = D-erythro-1-(imidazol-4-yl)glycerol 3-phosphate + 5-amino-1-(5-phospho-beta-D-ribosyl)imidazole-4-carboxamide + L-glutamate + H(+). Its pathway is amino-acid biosynthesis; L-histidine biosynthesis; L-histidine from 5-phospho-alpha-D-ribose 1-diphosphate: step 5/9. Its function is as follows. IGPS catalyzes the conversion of PRFAR and glutamine to IGP, AICAR and glutamate. The HisF subunit catalyzes the cyclization activity that produces IGP and AICAR from PRFAR using the ammonia provided by the HisH subunit. The polypeptide is Imidazole glycerol phosphate synthase subunit HisF (Xylella fastidiosa (strain M23)).